The primary structure comprises 272 residues: ATP synthase subunit a (272 aa).

Transmembrane regions (helical) follow at residues Thr41 to Phe61, Ile102 to Val122, Asp147 to Ile167, Leu212 to Trp232, and Ala243 to Val263.

The protein belongs to the ATPase A chain family. F-type ATPases have 2 components, CF(1) - the catalytic core - and CF(0) - the membrane proton channel. CF(1) has five subunits: alpha(3), beta(3), gamma(1), delta(1), epsilon(1). CF(0) has three main subunits: a(1), b(2) and c(9-12). The alpha and beta chains form an alternating ring which encloses part of the gamma chain. CF(1) is attached to CF(0) by a central stalk formed by the gamma and epsilon chains, while a peripheral stalk is formed by the delta and b chains.

It is found in the cell inner membrane. Its function is as follows. Key component of the proton channel; it plays a direct role in the translocation of protons across the membrane. The protein is ATP synthase subunit a of Edwardsiella ictaluri (strain 93-146).